The following is a 192-amino-acid chain: Phosphomevalonate kinase (192 aa).

ATP contacts are provided by residues 17 to 23 (KRKSGKD) and R141. N170 is a binding site for substrate. Residues H171, R176, and Q180 each coordinate ATP.

Monomer. As to expression, heart, liver, skeletal muscle, kidney, and pancreas. Lower level in brain, placenta and lung.

It is found in the cytoplasm. It localises to the cytosol. The catalysed reaction is (R)-5-phosphomevalonate + ATP = (R)-5-diphosphomevalonate + ADP. It functions in the pathway isoprenoid biosynthesis; isopentenyl diphosphate biosynthesis via mevalonate pathway; isopentenyl diphosphate from (R)-mevalonate: step 2/3. Its function is as follows. Catalyzes the reversible ATP-dependent phosphorylation of mevalonate 5-phosphate to produce mevalonate diphosphate and ADP, a key step in the mevalonic acid mediated biosynthesis of isopentenyl diphosphate and other polyisoprenoid metabolites. The polypeptide is Phosphomevalonate kinase (PMVK) (Homo sapiens (Human)).